Here is a 247-residue protein sequence, read N- to C-terminus: DNA polymerase sliding clamp (247 aa).

It belongs to the PCNA family. As to quaternary structure, homotrimer. The subunits circularize to form a toroid; DNA passes through its center. Replication factor C (RFC) is required to load the toroid on the DNA.

Sliding clamp subunit that acts as a moving platform for DNA processing. Responsible for tethering the catalytic subunit of DNA polymerase and other proteins to DNA during high-speed replication. The protein is DNA polymerase sliding clamp of Haloarcula marismortui (strain ATCC 43049 / DSM 3752 / JCM 8966 / VKM B-1809) (Halobacterium marismortui).